A 141-amino-acid chain; its full sequence is Ribosome-binding factor A (141 aa).

It belongs to the RbfA family. As to quaternary structure, monomer. Binds 30S ribosomal subunits, but not 50S ribosomal subunits or 70S ribosomes.

It localises to the cytoplasm. Functionally, one of several proteins that assist in the late maturation steps of the functional core of the 30S ribosomal subunit. Associates with free 30S ribosomal subunits (but not with 30S subunits that are part of 70S ribosomes or polysomes). Required for efficient processing of 16S rRNA. May interact with the 5'-terminal helix region of 16S rRNA. The protein is Ribosome-binding factor A of Beijerinckia indica subsp. indica (strain ATCC 9039 / DSM 1715 / NCIMB 8712).